We begin with the raw amino-acid sequence, 1209 residues long: Nitric oxide synthase (1209 aa).

Ser-103 serves as a coordination point for (6R)-L-erythro-5,6,7,8-tetrahydrobiopterin. Cys-181 provides a ligand contact to heme b. Residues Gln-244, Trp-353, Tyr-354, Glu-358, and Asn-363 each coordinate L-arginine. Trp-444 and Phe-457 together coordinate (6R)-L-erythro-5,6,7,8-tetrahydrobiopterin. Tyr-472 lines the heme b pocket. The tract at residues 491–511 (VHRKFHFKQIARAVKFTSKLF) is calmodulin-binding. The 203-residue stretch at 521–723 (ATILYATETG…QFRAWSSKIF (203 aa)) folds into the Flavodoxin-like domain. 527-531 (TETGK) provides a ligand contact to FMN. The interval 603–622 (RGDGTSDLGSGTFKTPTPKS) is disordered. 669–700 (VFGLGSSAYPKFCHFGKTVDKILGDLGGERIL) provides a ligand contact to FMN. The FAD-binding FR-type domain maps to 776–1021 (KQLITCKVKE…IRRAPSFHMP (246 aa)). Residues 811 to 822 (YDPGDHVGVLAC) and 954 to 964 (LQPRFYSISSS) each bind FAD. NADP(+)-binding positions include 1028 to 1147 (LILV…QQKL) and 1128 to 1143 (NGHFYVCGDCKMAEEV).

The protein belongs to the NOS family. Heme b is required as a cofactor. It depends on FAD as a cofactor. The cofactor is FMN. In terms of tissue distribution, constitutively expressed at a low level in the larval fat body, hemocyte, Malpighian tubule, midgut, silk gland and adult antenna.

It catalyses the reaction 2 L-arginine + 3 NADPH + 4 O2 + H(+) = 2 L-citrulline + 2 nitric oxide + 3 NADP(+) + 4 H2O. With respect to regulation, expression is dependent on and stimulated by NADPH, calcium, BH4 and calmodulin. The activity is not dependent on FAD and is not stimulated by its presence. In terms of biological role, produces nitric oxide (NO) which is a messenger molecule with diverse functions throughout the body. Involved in the induction of immune gene expression. The protein is Nitric oxide synthase of Bombyx mori (Silk moth).